The following is a 311-amino-acid chain: Aspartate carbamoyltransferase catalytic subunit (311 aa).

Residues Arg59 and Thr60 each contribute to the carbamoyl phosphate site. Residue Lys87 coordinates L-aspartate. Positions 109, 139, and 142 each coordinate carbamoyl phosphate. L-aspartate contacts are provided by Arg172 and Arg224. The carbamoyl phosphate site is built by Ala265 and Pro266.

It belongs to the aspartate/ornithine carbamoyltransferase superfamily. ATCase family. In terms of assembly, heterododecamer (2C3:3R2) of six catalytic PyrB chains organized as two trimers (C3), and six regulatory PyrI chains organized as three dimers (R2).

The catalysed reaction is carbamoyl phosphate + L-aspartate = N-carbamoyl-L-aspartate + phosphate + H(+). It functions in the pathway pyrimidine metabolism; UMP biosynthesis via de novo pathway; (S)-dihydroorotate from bicarbonate: step 2/3. Functionally, catalyzes the condensation of carbamoyl phosphate and aspartate to form carbamoyl aspartate and inorganic phosphate, the committed step in the de novo pyrimidine nucleotide biosynthesis pathway. The protein is Aspartate carbamoyltransferase catalytic subunit of Streptococcus equi subsp. zooepidemicus (strain MGCS10565).